Reading from the N-terminus, the 259-residue chain is Protein YIF1B (259 aa).

The residue at position 1 (M1) is an N-acetylmethionine. The segment at 1–61 (MHATGLAAPA…QPSPGSLGYP (61 aa)) is disordered. The Cytoplasmic segment spans residues 9 to 153 (PAGTPRLRKW…APRFDINAPD (145 aa)). Residue T12 is modified to Phosphothreonine. The segment covering 14 to 24 (RLRKWPSKRRV) has biased composition (basic residues). S64 is subject to Phosphoserine. Residues 154–174 (LYIPAMAFITYILVAGLALGT) form a helical membrane-spanning segment. The Extracellular portion of the chain corresponds to 175–186 (QDRMIGGVLTGL). A helical transmembrane segment spans residues 187–207 (LFGKIGYYLVLAWCCVSIFVF). At 208–237 (MIRTLRLKILAQAAAEGVPVRGARNQLRMY) the chain is on the cytoplasmic side. A helical transmembrane segment spans residues 238-258 (LTMAVAAAQPVLMYWLTFHLV). A topological domain (extracellular) is located at residue R259.

Belongs to the YIF1 family. Interacts with HTR1A (via C-terminus). Interacts with ABCB9 (via TMD0); this interaction allows (but is not essential) the ER-to-Golgi trafficking and strongly depends on a salt bridge within TMD0. In terms of tissue distribution, highly expressed in brain. Expressed in heart, kidney, and lung and lower levels in spleen, muscle, and intestine (at protein level). Expressed in serotoninergic neurons (at protein level).

Its subcellular location is the endoplasmic reticulum membrane. It localises to the golgi apparatus membrane. It is found in the endoplasmic reticulum-Golgi intermediate compartment membrane. Functions in endoplasmic reticulum to Golgi vesicle-mediated transport and regulates the proper organization of the endoplasmic reticulum and the Golgi. Plays a key role in targeting to neuronal dendrites receptors such as HTR1A. Plays also a role in primary cilium and sperm flagellum assembly probably through protein transport to these compartments. This Rattus norvegicus (Rat) protein is Protein YIF1B.